The chain runs to 86 residues: Acyl carrier protein (86 aa).

One can recognise a Carrier domain in the interval 5 to 80 (EEILKKVQSI…EAVEFIIDKI (76 aa)). Ser-40 is modified (O-(pantetheine 4'-phosphoryl)serine).

The protein belongs to the acyl carrier protein (ACP) family. In terms of processing, 4'-phosphopantetheine is transferred from CoA to a specific serine of apo-ACP by AcpS. This modification is essential for activity because fatty acids are bound in thioester linkage to the sulfhydryl of the prosthetic group.

It is found in the plastid. The protein localises to the chloroplast. The protein operates within lipid metabolism; fatty acid biosynthesis. Its function is as follows. Carrier of the growing fatty acid chain in fatty acid biosynthesis. The sequence is that of Acyl carrier protein from Cyanidium caldarium (Red alga).